The chain runs to 336 residues: Ferrochelatase (336 aa).

Residues His206 and Glu287 each contribute to the Fe cation site.

The protein belongs to the ferrochelatase family.

The protein resides in the cytoplasm. It catalyses the reaction heme b + 2 H(+) = protoporphyrin IX + Fe(2+). The protein operates within porphyrin-containing compound metabolism; protoheme biosynthesis; protoheme from protoporphyrin-IX: step 1/1. In terms of biological role, catalyzes the ferrous insertion into protoporphyrin IX. This chain is Ferrochelatase, found in Neisseria gonorrhoeae (strain ATCC 700825 / FA 1090).